Consider the following 218-residue polypeptide: Ras-related protein R-Ras (218 aa).

A disordered region spans residues 1-30 (MSSGAASGTGRGRPRGGGPGPRDPPPGETH). Over residues 7 to 20 (SGTGRGRPRGGGPG) the composition is skewed to gly residues. 36 to 44 (GGGGVGKSA) provides a ligand contact to GTP. Residues 58-66 (YDPTIEDSY) carry the Effector region motif. Residues 83-87 (DTAGQ), 142-145 (NKAD), and 172-174 (SAK) each bind GTP. C215 is subject to Cysteine methyl ester. C215 is lipidated: S-geranylgeranyl cysteine. A propeptide spans 216-218 (VLL) (removed in mature form).

It belongs to the small GTPase superfamily. Ras family. In terms of assembly, interacts with PLCE1. Interacts (active GTP-bound form preferentially) with RGS14. Interacts with OSBPL3. Interacts with ZDHHC19. Post-translationally, S-palmitoylated by ZDHHC19, leading to increased association with membranes and with rafts/caveolae as well as enhanced cell viability.

Its subcellular location is the cell membrane. The enzyme catalyses GTP + H2O = GDP + phosphate + H(+). GTP-binding protein with GTPase activity, likely involved in the regulation of MAPK signaling pathway and thereby controlling multiple cellular processes. Regulates the organization of the actin cytoskeleton. With OSPBL3, modulates integrin beta-1 (ITGB1) activity. The chain is Ras-related protein R-Ras (Rras) from Mus musculus (Mouse).